The chain runs to 550 residues: Glutamyl-tRNA(Gln) amidotransferase subunit A, mitochondrial (550 aa).

Residues Lys79 and Ser171 each act as charge relay system in the active site. Ser195 functions as the Acyl-ester intermediate in the catalytic mechanism. Residues Glu371–Asn390 form a disordered region.

The protein belongs to the amidase family. GatA subfamily. In terms of assembly, subunit of the heterotrimeric GatCAB amidotransferase (AdT) complex, composed of A, B and C subunits.

Its subcellular location is the mitochondrion. The enzyme catalyses L-glutamyl-tRNA(Gln) + L-glutamine + ATP + H2O = L-glutaminyl-tRNA(Gln) + L-glutamate + ADP + phosphate + H(+). Its function is as follows. Allows the formation of correctly charged Gln-tRNA(Gln) through the transamidation of misacylated Glu-tRNA(Gln) in the mitochondria. The reaction takes place in the presence of glutamine and ATP through an activated gamma-phospho-Glu-tRNA(Gln). In Dictyostelium discoideum (Social amoeba), this protein is Glutamyl-tRNA(Gln) amidotransferase subunit A, mitochondrial.